Here is a 466-residue protein sequence, read N- to C-terminus: Probable agmatine/putrescine antiporter AguD (466 aa).

The next 12 membrane-spanning stretches (helical) occupy residues 8 to 28 (FSLF…EAAA), 30 to 50 (VAAI…AFLL), 85 to 105 (ASWF…VLCP), 120 to 140 (ISLL…LYPV), 144 to 164 (VWIL…LGGL), 192 to 212 (LSFI…CTFA), 226 to 246 (IIIG…GIGV), 273 to 293 (WFIS…MVSW), 325 to 345 (WGAA…APLL), 350 to 370 (LFWS…IPVF), 398 to 418 (VYMA…AIPL), and 426 to 446 (TEQL…ELII).

It belongs to the amino acid-polyamine-organocation (APC) superfamily. Glutamate:GABA antiporter (GGA) (TC 2.A.3.7) family.

It localises to the cell membrane. In terms of biological role, probably catalyzes agmatine/putrescine exchange. This Lactococcus lactis subsp. lactis (strain IL1403) (Streptococcus lactis) protein is Probable agmatine/putrescine antiporter AguD.